Reading from the N-terminus, the 250-residue chain is uncharacterized protein (250 aa).

This is an uncharacterized protein from Bacillus subtilis (strain 168).